Consider the following 88-residue polypeptide: Small ribosomal subunit protein uS15 (88 aa).

This sequence belongs to the universal ribosomal protein uS15 family. Part of the 30S ribosomal subunit. Forms a bridge to the 50S subunit in the 70S ribosome, contacting the 23S rRNA.

One of the primary rRNA binding proteins, it binds directly to 16S rRNA where it helps nucleate assembly of the platform of the 30S subunit by binding and bridging several RNA helices of the 16S rRNA. Its function is as follows. Forms an intersubunit bridge (bridge B4) with the 23S rRNA of the 50S subunit in the ribosome. In Paracidovorax citrulli (strain AAC00-1) (Acidovorax citrulli), this protein is Small ribosomal subunit protein uS15.